Reading from the N-terminus, the 47-residue chain is Large ribosomal subunit protein bL34 (47 aa).

This sequence belongs to the bacterial ribosomal protein bL34 family.

The chain is Large ribosomal subunit protein bL34 from Nocardia farcinica (strain IFM 10152).